Reading from the N-terminus, the 422-residue chain is Succinate--CoA ligase [ADP-forming] subunit beta, mitochondrial (422 aa).

The transit peptide at 1–27 directs the protein to the mitochondrion; sequence MVRGSLGKLASRALSVAGKWQHQQLRR. The ATP-grasp domain maps to 36–279; it reads AELMGKYGIN…TTQEDPREVA (244 aa). Residues Lys75, 82–84, and Glu142 contribute to the ATP site; that span reads GRG. The Mg(2+) site is built by Asn234 and Asp248. Substrate contacts are provided by residues Asn299 and 356 to 358; that span reads GIM.

Belongs to the succinate/malate CoA ligase beta subunit family. Heterodimer of an alpha and a beta subunit. Requires Mg(2+) as cofactor.

Its subcellular location is the mitochondrion. It catalyses the reaction succinate + ATP + CoA = succinyl-CoA + ADP + phosphate. The protein operates within carbohydrate metabolism; tricarboxylic acid cycle; succinate from succinyl-CoA (ligase route): step 1/1. Functionally, succinyl-CoA synthetase functions in the citric acid cycle (TCA), coupling the hydrolysis of succinyl-CoA to the synthesis of ATP and thus represents the only step of substrate-level phosphorylation in the TCA. The beta subunit provides nucleotide specificity of the enzyme and binds the substrate succinate, while the binding sites for coenzyme A and phosphate are found in the alpha subunit. The polypeptide is Succinate--CoA ligase [ADP-forming] subunit beta, mitochondrial (Oryza sativa subsp. japonica (Rice)).